The primary structure comprises 233 residues: Large ribosomal subunit protein uL1 (233 aa).

This sequence belongs to the universal ribosomal protein uL1 family. In terms of assembly, part of the 50S ribosomal subunit.

In terms of biological role, binds directly to 23S rRNA. The L1 stalk is quite mobile in the ribosome, and is involved in E site tRNA release. Its function is as follows. Protein L1 is also a translational repressor protein, it controls the translation of the L11 operon by binding to its mRNA. The sequence is that of Large ribosomal subunit protein uL1 from Proteus mirabilis (strain HI4320).